The primary structure comprises 352 residues: tRNA-specific 2-thiouridylase MnmA (352 aa).

ATP-binding positions include 9–16 (ALSGGVDS) and Met-35. Cys-96 functions as the Nucleophile in the catalytic mechanism. An intrachain disulfide couples Cys-96 to Cys-192. An ATP-binding site is contributed by Gly-120. The segment at 142–144 (KDQ) is interaction with tRNA. Cys-192 serves as the catalytic Cysteine persulfide intermediate. The interval 299 to 300 (RY) is interaction with tRNA.

Belongs to the MnmA/TRMU family.

The protein localises to the cytoplasm. It carries out the reaction S-sulfanyl-L-cysteinyl-[protein] + uridine(34) in tRNA + AH2 + ATP = 2-thiouridine(34) in tRNA + L-cysteinyl-[protein] + A + AMP + diphosphate + H(+). In terms of biological role, catalyzes the 2-thiolation of uridine at the wobble position (U34) of tRNA, leading to the formation of s(2)U34. This is tRNA-specific 2-thiouridylase MnmA from Acidithiobacillus ferrooxidans (strain ATCC 23270 / DSM 14882 / CIP 104768 / NCIMB 8455) (Ferrobacillus ferrooxidans (strain ATCC 23270)).